The following is a 525-amino-acid chain: Probable protein kinase UbiB (525 aa).

Residues 118–500 form the Protein kinase domain; it reads DFERVPVASA…QKRTNRLLQG (383 aa). ATP is bound by residues 124–132 and Lys150; that span reads VASASIAQV. The active-site Proton acceptor is Asp285. A helical membrane pass occupies residues 501-521; that stretch reads LLLFGVAVGVGAVLARAFLAL.

This sequence belongs to the ABC1 family. UbiB subfamily.

It localises to the cell inner membrane. It functions in the pathway cofactor biosynthesis; ubiquinone biosynthesis [regulation]. Functionally, is probably a protein kinase regulator of UbiI activity which is involved in aerobic coenzyme Q (ubiquinone) biosynthesis. The protein is Probable protein kinase UbiB of Paraburkholderia phytofirmans (strain DSM 17436 / LMG 22146 / PsJN) (Burkholderia phytofirmans).